Here is a 125-residue protein sequence, read N- to C-terminus: uncharacterized protein (125 aa).

This is an uncharacterized protein from Caenorhabditis elegans.